Consider the following 502-residue polypeptide: Lysine--tRNA ligase (502 aa).

Mg(2+)-binding residues include Glu398 and Glu405.

Belongs to the class-II aminoacyl-tRNA synthetase family. As to quaternary structure, homodimer. The cofactor is Mg(2+).

Its subcellular location is the cytoplasm. It catalyses the reaction tRNA(Lys) + L-lysine + ATP = L-lysyl-tRNA(Lys) + AMP + diphosphate. The chain is Lysine--tRNA ligase (lysS) from Thermotoga maritima (strain ATCC 43589 / DSM 3109 / JCM 10099 / NBRC 100826 / MSB8).